We begin with the raw amino-acid sequence, 413 residues long: MRALDSAPTAHLYVCGITPYDATHLGHAFTYLTYDLAQRVLRDSGHKVLYVQNVTDVDDPLLERADRDGLDWRDLAAREIALFREDMTALRMLAPDSYVGVVEAIPMIVDMVAELVDRGAAYHVDDDLYFSVAAAPAFGEISHLSRAEMLAICAERGGDPGRGGKKDPLDPLLWRARRPGEPSWPSPFGPGRPGWHIECSAIARHHLGGVVDLQGGGTDLSFPHHECSAAHAEVAAGARPFARSYVHTAMVSLDGHKMSKSRGNLEFVSRLRRAGTDLAALRLALLDHRHTADWEWSASLLTDAVARVGRWRAAVALPAGPDAQGVLAAVRERLADDLDAPGALAAVDAWVDAALADAGGGPVGGSVGVGSSGGSLRGSGGAASAGGEAPALVARLVDTLLGVDLEPVRPRGS.

Cys15 provides a ligand contact to Zn(2+). L-cysteinyl-5'-AMP contacts are provided by residues 15-18 (CGIT), Thr30, and 53-55 (NVT). The short motif at 17–27 (ITPYDATHLGH) is the 'HIGH' region element. The short motif at 155–160 (ERGGDP) is the 'ERGGDP' region element. Trp195 lines the L-cysteinyl-5'-AMP pocket. Cys199 contributes to the Zn(2+) binding site. Residue 217–219 (GTD) coordinates L-cysteinyl-5'-AMP. His224 is a Zn(2+) binding site. Residue Val251 coordinates L-cysteinyl-5'-AMP. The 'KMSKS' region signature appears at 257–261 (KMSKS).

Belongs to the class-I aminoacyl-tRNA synthetase family. MshC subfamily. As to quaternary structure, monomer. The cofactor is Zn(2+).

It carries out the reaction 1D-myo-inositol 2-amino-2-deoxy-alpha-D-glucopyranoside + L-cysteine + ATP = 1D-myo-inositol 2-(L-cysteinylamino)-2-deoxy-alpha-D-glucopyranoside + AMP + diphosphate + H(+). Its function is as follows. Catalyzes the ATP-dependent condensation of GlcN-Ins and L-cysteine to form L-Cys-GlcN-Ins. In Frankia alni (strain DSM 45986 / CECT 9034 / ACN14a), this protein is L-cysteine:1D-myo-inositol 2-amino-2-deoxy-alpha-D-glucopyranoside ligase.